The sequence spans 206 residues: Cytidylate kinase (206 aa).

9–17 lines the ATP pocket; sequence GPAAAGKGT. The segment covering 155-168 has biased composition (basic and acidic residues); sequence LRERDRRDREREAA. The tract at residues 155–174 is disordered; sequence LRERDRRDREREAAPLRPAP.

This sequence belongs to the cytidylate kinase family. Type 1 subfamily.

It is found in the cytoplasm. The catalysed reaction is CMP + ATP = CDP + ADP. The enzyme catalyses dCMP + ATP = dCDP + ADP. This Cereibacter sphaeroides (strain KD131 / KCTC 12085) (Rhodobacter sphaeroides) protein is Cytidylate kinase.